The sequence spans 369 residues: mRNA cap guanine-N(7) methyltransferase 1 (369 aa).

Residues methionine 1–leucine 55 are disordered. Residues glycine 22–glycine 32 are compositionally biased toward gly residues. Over residues tyrosine 33–serine 48 the composition is skewed to basic and acidic residues. Residues serine 61–arginine 340 enclose the mRNA cap 0 methyltransferase domain. Asparagine 70–asparagine 71 is an mRNA binding site. S-adenosyl-L-methionine is bound by residues lysine 74, alanine 92, aspartate 114, aspartate 149–cysteine 150, and glutamine 171–alanine 173.

Belongs to the class I-like SAM-binding methyltransferase superfamily. mRNA cap 0 methyltransferase family.

The protein resides in the nucleus. It carries out the reaction a 5'-end (5'-triphosphoguanosine)-ribonucleoside in mRNA + S-adenosyl-L-methionine = a 5'-end (N(7)-methyl 5'-triphosphoguanosine)-ribonucleoside in mRNA + S-adenosyl-L-homocysteine. Its function is as follows. mRNA-capping methyltransferase that methylates the N7 position of the added guanosine to the 5'-cap structure of mRNAs. Binds RNA containing 5'-terminal GpppC. This chain is mRNA cap guanine-N(7) methyltransferase 1, found in Oryza sativa subsp. japonica (Rice).